We begin with the raw amino-acid sequence, 425 residues long: MASAFSSTVGAPASTPTIFLGKKVKNYYHGGNKMKSRVVRVMAAKKELDQGKQTDADRWKGLAYDISDDQQDITRGKGIVDSLFQAPMGDGTHEAILSSYEYISQGLRKYDFDNTMDGLYIAPAFMDKLIVHLAKNFMTLPNIKVPLILGIWGGKGQGKSFQCELVFAKMGINPIMMSAGELESGNGEPAKLIRQRYREAADIINKGKMCCLFINDLDAGAGRMGGTTQYTVNNQMVNATLMNIADAPTNVQLPGMYNKEENPRVPIIVTGNDFSTLYAPLIRDGRMEKFYWAPTREDRIGVCKGIFRTDNVPDEAVVRLVDTFPGQSIDFFGALRARVYDDEVRKWVGEIGVENISKRLVNSREGPPTFDQPKMTIEKLMEYGHMLVQEQENVKRVQLADKYLSEAALGQANDDAMKTGAFYGK.

The N-terminal 43 residues, 1–43 (MASAFSSTVGAPASTPTIFLGKKVKNYYHGGNKMKSRVVRVMA), are a transit peptide targeting the chloroplast. Residue 153–160 (GGKGQGKS) participates in ATP binding.

It belongs to the RuBisCO activase family.

Its subcellular location is the plastid. It localises to the chloroplast stroma. Activation of RuBisCO (ribulose-1,5-bisphosphate carboxylase/oxygenase; EC 4.1.1.39) involves the ATP-dependent carboxylation of the epsilon-amino group of lysine leading to a carbamate structure. The protein is Ribulose bisphosphate carboxylase/oxygenase activase B, chloroplastic (RCAB) of Hordeum vulgare (Barley).